Reading from the N-terminus, the 171-residue chain is Protein TIFY 11d (171 aa).

In terms of domain architecture, Tify spans 65 to 100 (PSAGTAPLTIFYDGRMVVVDDVPAEKAAELMRLAGS). The short motif at 117-142 (PIARKASLQRFLQKRKHRITTTSEPY) is the Jas element. The Nuclear localization signal motif lies at 119-126 (ARKASLQR).

The protein belongs to the TIFY/JAZ family. Interacts with BHLH148 and COI1A. Interacts with COI1A, COI1B and COI2 in a coronatine-dependent manner. Coronatine is an analog of jasmonoyl isoleucine (JA-Ile). In terms of processing, ubiquitinated. Increase in jasmonoyl isoleucine (JA-Ile) levels mediates its degradation via COI1A-mediated proteasome pathway.

It localises to the nucleus. In terms of biological role, repressor of jasmonate (JA) responses. May act on an initial response of JA-regulated gene expression toward drought tolerance as part of a BHLH148-TIFY11D/JAZ12-COI1A complex. The polypeptide is Protein TIFY 11d (Oryza sativa subsp. indica (Rice)).